A 98-amino-acid chain; its full sequence is NADH-ubiquinone oxidoreductase chain 4L (98 aa).

Transmembrane regions (helical) follow at residues 1 to 21 (MMSISLNLTMAFLLALAGVLI), 28 to 48 (STLLCLEGMMLSLFILMALLI), and 59 to 79 (APLILLVFSACEAGVGLALLV).

Belongs to the complex I subunit 4L family. Core subunit of respiratory chain NADH dehydrogenase (Complex I) which is composed of 45 different subunits.

It is found in the mitochondrion inner membrane. The enzyme catalyses a ubiquinone + NADH + 5 H(+)(in) = a ubiquinol + NAD(+) + 4 H(+)(out). Functionally, core subunit of the mitochondrial membrane respiratory chain NADH dehydrogenase (Complex I) which catalyzes electron transfer from NADH through the respiratory chain, using ubiquinone as an electron acceptor. Part of the enzyme membrane arm which is embedded in the lipid bilayer and involved in proton translocation. This chain is NADH-ubiquinone oxidoreductase chain 4L (MT-ND4L), found in Osphranter robustus (Wallaroo).